The primary structure comprises 243 residues: PF03932 family protein CutC (243 aa).

Belongs to the CutC family.

The protein resides in the cytoplasm. The sequence is that of PF03932 family protein CutC from Glaesserella parasuis serovar 5 (strain SH0165) (Haemophilus parasuis).